The chain runs to 626 residues: Acetolactate synthase large subunit (626 aa).

Residues 1–13 are compositionally biased toward polar residues; it reads MNVAASQQPTPAT. The disordered stretch occupies residues 1–23; it reads MNVAASQQPTPATVASRGRSAAP. Thiamine diphosphate is bound at residue Glu73. FAD contacts are provided by residues Arg175, 281-302, and 324-343; these read HGTVSAVGALQRSDLLIAIGSR and DIDPAEIGKIKQVEVPIVGD. Residues 416 to 496 form a thiamine pyrophosphate binding region; it reads QHQMWAAQFV…IKIALINNGN (81 aa). Residues Asp467 and Asn494 each coordinate Mg(2+).

The protein belongs to the TPP enzyme family. In terms of assembly, dimer of large and small chains. Mg(2+) serves as cofactor. The cofactor is thiamine diphosphate.

It catalyses the reaction 2 pyruvate + H(+) = (2S)-2-acetolactate + CO2. It functions in the pathway amino-acid biosynthesis; L-isoleucine biosynthesis; L-isoleucine from 2-oxobutanoate: step 1/4. The protein operates within amino-acid biosynthesis; L-valine biosynthesis; L-valine from pyruvate: step 1/4. The polypeptide is Acetolactate synthase large subunit (ilvB) (Corynebacterium glutamicum (strain ATCC 13032 / DSM 20300 / JCM 1318 / BCRC 11384 / CCUG 27702 / LMG 3730 / NBRC 12168 / NCIMB 10025 / NRRL B-2784 / 534)).